The primary structure comprises 563 residues: Eukaryotic translation initiation factor 3 subunit D-1 (563 aa).

The interval 98–167 (VQKPPHQRGR…GPPPKMRESS (70 aa)) is disordered. Residues 100 to 121 (KPPHQRGRFRNMRNSRSGRGRN) are compositionally biased toward basic residues. Position 128 is a phosphothreonine (Thr-128). Positions 291–305 (EFDLLTVNESSVEPP) are RNA gate.

It belongs to the eIF-3 subunit D family. Component of the eukaryotic translation initiation factor 3 (eIF-3) complex. The eIF-3 complex interacts with pix.

It is found in the cytoplasm. In terms of biological role, mRNA cap-binding component of the eukaryotic translation initiation factor 3 (eIF-3) complex, which is involved in protein synthesis of a specialized repertoire of mRNAs and, together with other initiation factors, stimulates binding of mRNA and methionyl-tRNAi to the 40S ribosome. The eIF-3 complex specifically targets and initiates translation of a subset of mRNAs involved in cell proliferation. In the eIF-3 complex, eif3d specifically recognizes and binds the 7-methylguanosine cap of a subset of mRNAs. The polypeptide is Eukaryotic translation initiation factor 3 subunit D-1 (Drosophila grimshawi (Hawaiian fruit fly)).